Here is a 347-residue protein sequence, read N- to C-terminus: NADH-ubiquinone oxidoreductase chain 2 (347 aa).

The next 10 membrane-spanning stretches (helical) occupy residues 13–33 (IFTG…WLGL), 55–75 (AAIK…MAIL), 96–116 (LMIV…FWVP), 122–142 (VPLT…ISIM), 151–171 (TNIL…GGLN), 178–198 (ILAY…PYNP), 199–219 (DITI…FLIL), 237–257 (LTWL…LPPL), 274–294 (GNLI…YFYV), and 326–346 (LPTL…ILSI).

It belongs to the complex I subunit 2 family. Core subunit of respiratory chain NADH dehydrogenase (Complex I) which is composed of 45 different subunits. Interacts with TMEM242.

It is found in the mitochondrion inner membrane. The enzyme catalyses a ubiquinone + NADH + 5 H(+)(in) = a ubiquinol + NAD(+) + 4 H(+)(out). Core subunit of the mitochondrial membrane respiratory chain NADH dehydrogenase (Complex I) which catalyzes electron transfer from NADH through the respiratory chain, using ubiquinone as an electron acceptor. Essential for the catalytic activity and assembly of complex I. The polypeptide is NADH-ubiquinone oxidoreductase chain 2 (Pongo abelii (Sumatran orangutan)).